Here is a 240-residue protein sequence, read N- to C-terminus: Transmembrane emp24 domain-containing protein 6 (240 aa).

Residues 1–21 (MFPLLFVAGLVVLNLVSSARS) form the signal peptide. At 22 to 200 (QKTEPLSGTG…FFLLQSNYNY (179 aa)) the chain is on the lumenal side. In terms of domain architecture, GOLD spans 53-138 (TECFWQFAHQ…SVQVYLNFGV (86 aa)). Asn-107 and Asn-156 each carry an N-linked (GlcNAc...) asparagine glycan. Residues 201–223 (VNWWSTAQSLVIVLSGILQLYFL) form a helical membrane-spanning segment. The Cytoplasmic segment spans residues 224 to 240 (KRLFNTPMTTETQKPRC).

Belongs to the EMP24/GP25L family.

The protein localises to the endoplasmic reticulum membrane. The sequence is that of Transmembrane emp24 domain-containing protein 6 (TMED6) from Bos taurus (Bovine).